The sequence spans 382 residues: Glutaminyl-peptide cyclotransferase-like protein (382 aa).

A helical membrane pass occupies residues 35–55 (LLPLLLALAVGSAFYTIWSGW). Cysteine 167 and cysteine 191 are joined by a disulfide. Residue aspartate 186 participates in Zn(2+) binding. Glutamate 225 acts as the Proton acceptor in catalysis. Residue glutamate 226 coordinates Zn(2+). The active-site Proton acceptor is aspartate 269. Residue histidine 351 participates in Zn(2+) binding.

The protein belongs to the glutaminyl-peptide cyclotransferase family.

The protein localises to the golgi apparatus membrane. The catalysed reaction is N-terminal L-glutaminyl-[peptide] = N-terminal 5-oxo-L-prolyl-[peptide] + NH4(+). Its function is as follows. Responsible for the biosynthesis of pyroglutamyl peptides. This Macaca fascicularis (Crab-eating macaque) protein is Glutaminyl-peptide cyclotransferase-like protein (QPCTL).